We begin with the raw amino-acid sequence, 401 residues long: NADH-quinone oxidoreductase subunit D 2 (401 aa).

Belongs to the complex I 49 kDa subunit family. As to quaternary structure, NDH-1 is composed of 14 different subunits. Subunits NuoB, C, D, E, F, and G constitute the peripheral sector of the complex.

Its subcellular location is the cell inner membrane. It catalyses the reaction a quinone + NADH + 5 H(+)(in) = a quinol + NAD(+) + 4 H(+)(out). Its function is as follows. NDH-1 shuttles electrons from NADH, via FMN and iron-sulfur (Fe-S) centers, to quinones in the respiratory chain. The immediate electron acceptor for the enzyme in this species is believed to be ubiquinone. Couples the redox reaction to proton translocation (for every two electrons transferred, four hydrogen ions are translocated across the cytoplasmic membrane), and thus conserves the redox energy in a proton gradient. This chain is NADH-quinone oxidoreductase subunit D 2, found in Thermodesulfovibrio yellowstonii (strain ATCC 51303 / DSM 11347 / YP87).